The primary structure comprises 185 residues: Ribosome-recycling factor (185 aa).

Belongs to the RRF family.

It localises to the cytoplasm. In terms of biological role, responsible for the release of ribosomes from messenger RNA at the termination of protein biosynthesis. May increase the efficiency of translation by recycling ribosomes from one round of translation to another. The polypeptide is Ribosome-recycling factor (Syntrophus aciditrophicus (strain SB)).